The primary structure comprises 247 residues: Cell division protein ZapD (247 aa).

The protein belongs to the ZapD family. Interacts with FtsZ.

It is found in the cytoplasm. Functionally, cell division factor that enhances FtsZ-ring assembly. Directly interacts with FtsZ and promotes bundling of FtsZ protofilaments, with a reduction in FtsZ GTPase activity. The chain is Cell division protein ZapD from Escherichia coli O139:H28 (strain E24377A / ETEC).